We begin with the raw amino-acid sequence, 535 residues long: CTP synthase (535 aa).

The tract at residues 1–267 (MTKYIFVTGG…DKLVCDHMKL (267 aa)) is amidoligase domain. Residue Ser13 participates in CTP binding. Residue Ser13 participates in UTP binding. 14–19 (SLGKGI) lines the ATP pocket. Tyr54 is an L-glutamine binding site. An ATP-binding site is contributed by Asp71. Mg(2+)-binding residues include Asp71 and Glu141. Residues 148-150 (DIE), 188-193 (KTKPTQ), and Lys224 contribute to the CTP site. UTP contacts are provided by residues 188–193 (KTKPTQ) and Lys224. The Glutamine amidotransferase type-1 domain maps to 292-534 (TISLVGKYVE…IGASVQAAEQ (243 aa)). An L-glutamine-binding site is contributed by Gly354. Cys381 functions as the Nucleophile; for glutamine hydrolysis in the catalytic mechanism. Residues 382-385 (LGMQ), Glu405, and Arg462 each bind L-glutamine. Residues His507 and Glu509 contribute to the active site.

This sequence belongs to the CTP synthase family. In terms of assembly, homotetramer.

It catalyses the reaction UTP + L-glutamine + ATP + H2O = CTP + L-glutamate + ADP + phosphate + 2 H(+). It carries out the reaction L-glutamine + H2O = L-glutamate + NH4(+). The enzyme catalyses UTP + NH4(+) + ATP = CTP + ADP + phosphate + 2 H(+). The protein operates within pyrimidine metabolism; CTP biosynthesis via de novo pathway; CTP from UDP: step 2/2. Its activity is regulated as follows. Allosterically activated by GTP, when glutamine is the substrate; GTP has no effect on the reaction when ammonia is the substrate. The allosteric effector GTP functions by stabilizing the protein conformation that binds the tetrahedral intermediate(s) formed during glutamine hydrolysis. Inhibited by the product CTP, via allosteric rather than competitive inhibition. Functionally, catalyzes the ATP-dependent amination of UTP to CTP with either L-glutamine or ammonia as the source of nitrogen. Regulates intracellular CTP levels through interactions with the four ribonucleotide triphosphates. The protein is CTP synthase of Bacillus velezensis (strain DSM 23117 / BGSC 10A6 / LMG 26770 / FZB42) (Bacillus amyloliquefaciens subsp. plantarum).